The following is a 126-amino-acid chain: Large ribosomal subunit protein bL20 (126 aa).

The protein belongs to the bacterial ribosomal protein bL20 family.

In terms of biological role, binds directly to 23S ribosomal RNA and is necessary for the in vitro assembly process of the 50S ribosomal subunit. It is not involved in the protein synthesizing functions of that subunit. The polypeptide is Large ribosomal subunit protein bL20 (Acholeplasma laidlawii (strain PG-8A)).